The following is a 519-amino-acid chain: Protein BANP (519 aa).

3 positions are modified to phosphoserine: S19, S90, and S100. The stretch at 53–90 (IKTICLRLDSIEAKLQALEATCKSLEEKLDLVTNKQHS) forms a coiled coil. Residue K133 forms a Glycyl lysine isopeptide (Lys-Gly) (interchain with G-Cter in SUMO2) linkage. An interaction with CUX1 and HDAC1 region spans residues 152–342 (NAVPGRRQNT…FSRRTPNSSS (191 aa)). Over residues 168 to 177 (GQEDSHHEDG) the composition is skewed to basic and acidic residues. Positions 168–196 (GQEDSHHEDGESGSEASDSVSSCGQAGSQ) are disordered. The segment covering 180–189 (GSEASDSVSS) has biased composition (low complexity). In terms of domain architecture, BEN spans 226–322 (EMRVRCAIIP…SKCRTAWRRK (97 aa)). K275 is modified (N6-acetyllysine). Residues 327 to 364 (SLAVKSFSRRTPNSSSYCPSEPMMSTPPPASELPQPQP) are disordered. Polar residues predominate over residues 335–344 (RRTPNSSSYC). 2 positions are modified to phosphothreonine: T337 and T352. The DNA-binding stretch occupies residues 342-393 (SYCPSEPMMSTPPPASELPQPQPQPQALHYALANAQQVQIHQIGEDGQVQVG). Over residues 351 to 364 (STPPPASELPQPQP) the composition is skewed to pro residues.

It belongs to the BANP/SMAR1 family. In terms of assembly, part of a corepressor complex containing BANP, HDAC1, SIN3A, SIN3B, RBL1 and RBL2. Forms a trimeric complex in the nucleus consisting of BANP, HDAC6 and KHDRBS1/SAM68; HDAC6 keeps KHDRBS1 in a deacetylated state which inhibits the inclusion of CD44 alternate exons. The complex is disrupted by MAPK1/MAPK3-mediated phosphorylation of BANP which results in BANP export to the cytoplasm. This facilitates acetylation of KHDRBS1 and CD44 variant exon inclusion. Interacts with TP53. Interacts with CUX1/CDP. Interacts with HDAC1. In terms of processing, MAPK1/MAPK3-mediated phosphorylation at Thr-337 and Thr-352 results in export to the cytoplasm. In terms of tissue distribution, down-regulated in breast cancer cell lines.

It localises to the nucleus. The protein localises to the nucleus speckle. It is found in the cytoplasm. Functionally, controls V(D)J recombination during T-cell development by repressing T-cell receptor (TCR) beta enhancer function. Binds to scaffold/matrix attachment region beta (S/MARbeta), an ATC-rich DNA sequence located upstream of the TCR beta enhancer. Represses cyclin D1 transcription by recruiting HDAC1 to its promoter, thereby diminishing H3K9ac, H3S10ph and H4K8ac levels. Promotes TP53 activation, which causes cell cycle arrest. Plays a role in the regulation of alternative splicing. Binds to CD44 pre-mRNA and negatively regulates the inclusion of CD44 proximal variable exons v2-v6 but has no effect on distal variable exons v7-v10. The chain is Protein BANP (BANP) from Homo sapiens (Human).